A 176-amino-acid polypeptide reads, in one-letter code: ATP synthase subunit d, mitochondrial (176 aa).

F-type ATP synthases have 2 components, the catalytic core F(1) and the membrane-embedded component F(0), linked together by a central stalk and a peripheral stalk. The central stalk, also called rotor shaft, is often seen as part of F(1). The peripheral stalk is seen as part of F(0). F(0) contains the membrane channel next to the rotor. F-type ATP synthases form dimers but each monomer functions independently in ATP generation. The dimer consists of 17 different polypeptides: ATP1 (subunit alpha, 3 molecules per monomer, part of F(1)), ATP2 (subunit beta, 3 copies per monomer, part of F(1)), ATP3 (subunit gamma, part of the central stalk), ATP4 (subunit b, part of the peripheral stalk), ATP5/OSCP (subunit 5/OSCP, part of the peripheral stalk), ATP6 (subunit a, part of the peripheral stalk), ATP7 (subunit d, part of the peripheral stalk), ATP8 (subunit 8, part of the peripheral stalk), OLI1 (subunit c, part of the rotor, 10 molecules per monomer), ATP14 (subunit h, part of the peripheral stalk), ATP15 (subunit epsilon, part of the central stalk), ATP16 (subunit delta, part of the central stalk), ATP17 (subunit f, part of the peripheral stalk), ATP18 (subunit i/j, part of the peripheral stalk), ATP19 (subunit k, dimer-specific, at interface between monomers), ATP20 (subunit g, at interface between monomers), TIM11 (subunit e, at interface between monomers).

It localises to the mitochondrion inner membrane. In terms of biological role, mitochondrial membrane ATP synthase (F(1)F(0) ATP synthase or Complex V) produces ATP from ADP in the presence of a proton gradient across the membrane which is generated by electron transport complexes of the respiratory chain. F-type ATP synthases consist of two structural domains, F(1) - containing the extramembraneous catalytic core, and F(0) - containing the membrane proton channel, linked together by a central stalk and a peripheral stalk. During catalysis, ATP synthesis in the catalytic domain of F(1) is coupled via a rotary mechanism of the central stalk subunits to proton translocation. Part of the complex F(0) domain and the peripheral stalk, which acts as a stator to hold the catalytic alpha/ATP1(3)beta/ATP2(3) subcomplex and subunit a/ATP6 static relative to the rotary elements. The sequence is that of ATP synthase subunit d, mitochondrial from Yarrowia lipolytica (strain CLIB 122 / E 150) (Yeast).